Consider the following 149-residue polypeptide: UPF0260 protein PSPPH_1551 (149 aa).

Belongs to the UPF0260 family.

The protein is UPF0260 protein PSPPH_1551 of Pseudomonas savastanoi pv. phaseolicola (strain 1448A / Race 6) (Pseudomonas syringae pv. phaseolicola (strain 1448A / Race 6)).